The sequence spans 622 residues: 1-deoxy-D-xylulose-5-phosphate synthase (622 aa).

Residues histidine 80 and glycine 121 to serine 123 contribute to the thiamine diphosphate site. Aspartate 152 provides a ligand contact to Mg(2+). Thiamine diphosphate-binding positions include glycine 153–alanine 154, asparagine 181, tyrosine 288, and glutamate 370. Asparagine 181 contacts Mg(2+).

It belongs to the transketolase family. DXPS subfamily. Homodimer. Mg(2+) serves as cofactor. It depends on thiamine diphosphate as a cofactor.

It catalyses the reaction D-glyceraldehyde 3-phosphate + pyruvate + H(+) = 1-deoxy-D-xylulose 5-phosphate + CO2. Its pathway is metabolic intermediate biosynthesis; 1-deoxy-D-xylulose 5-phosphate biosynthesis; 1-deoxy-D-xylulose 5-phosphate from D-glyceraldehyde 3-phosphate and pyruvate: step 1/1. In terms of biological role, catalyzes the acyloin condensation reaction between C atoms 2 and 3 of pyruvate and glyceraldehyde 3-phosphate to yield 1-deoxy-D-xylulose-5-phosphate (DXP). The protein is 1-deoxy-D-xylulose-5-phosphate synthase of Shewanella denitrificans (strain OS217 / ATCC BAA-1090 / DSM 15013).